A 511-amino-acid chain; its full sequence is Cytochrome P450 monooxygenase cypX (511 aa).

Residues 18–38 traverse the membrane as a helical segment; the sequence is LPFSLALVAAAFVLYNIVSII. N-linked (GlcNAc...) asparagine glycosylation is found at Asn162 and Asn407. Cys454 is a heme binding site.

The protein belongs to the cytochrome P450 family. Heme serves as cofactor.

The protein localises to the membrane. Its pathway is mycotoxin biosynthesis. Cytochrome P450 monooxygenase; part of the fragmented gene cluster that mediates the biosynthesis of dothistromin (DOTH), a polyketide toxin very similar in structure to the aflatoxin precursor, versicolorin B. The first step of the pathway is the conversion of acetate to norsolorinic acid (NOR) and requires the fatty acid synthase subunits hexA and hexB, as well as the polyketide synthase pksA. PksA combines a hexanoyl starter unit and 7 malonyl-CoA extender units to synthesize the precursor NOR. The hexanoyl starter unit is provided to the acyl-carrier protein (ACP) domain by the fungal fatty acid synthase hexA/hexB. The second step is the conversion of NOR to averantin (AVN) and requires the norsolorinic acid ketoreductase nor1, which catalyzes the dehydration of norsolorinic acid to form (1'S)-averantin. The cytochrome P450 monooxygenase avnA then catalyzes the hydroxylation of AVN to 5'hydroxyaverantin (HAVN). The next step is performed by adhA that transforms HAVN to averufin (AVF). Averufin might then be converted to hydroxyversicolorone by cypX and avfA. Hydroxyversicolorone is further converted versiconal hemiacetal acetate (VHA) by moxY. VHA is then the substrate for the versiconal hemiacetal acetate esterase est1 to yield versiconal (VAL). Versicolorin B synthase vbsA then converts VAL to versicolorin B (VERB) by closing the bisfuran ring. Then, the activity of the versicolorin B desaturase verB leads to versicolorin A (VERA). DotB, a predicted chloroperoxidase, may perform epoxidation of the A-ring of VERA. Alternatively, a cytochrome P450, such as cypX or avnA could catalyze this step. It is also possible that another, uncharacterized, cytochrome P450 enzyme is responsible for this step. Opening of the epoxide could potentially be achieved by the epoxide hydrolase epoA. However, epoA seems not to be required for DOTH biosynthesis, but other epoxide hydrolases may have the ability to complement this hydrolysis. Alternatively, opening of the epoxide ring could be achieved non-enzymatically. The next step is the deoxygenation of ring A to yield the 5,8-dihydroxyanthraquinone which is most likely catalyzed by the NADPH dehydrogenase encoded by ver1. The last stages of DOTH biosynthesis are proposed to involve hydroxylation of the bisfuran. OrdB and norB might have oxidative roles here. An alternative possibility is that cytochrome P450 monoogenases such as avnA and cypX might perform these steps in addition to previously proposed steps. This is Cytochrome P450 monooxygenase cypX from Dothistroma septosporum (Red band needle blight fungus).